A 677-amino-acid chain; its full sequence is Pannexin-2 (677 aa).

The Cytoplasmic portion of the chain corresponds to 11 to 53; that stretch reads MATALLAGEKLRELILPGSQDDKAGALAALLLQLKLELPFDRV. Residues 54-74 traverse the membrane as a helical segment; the sequence is VTIGTVLVPILLVTLVFTKNF. The Extracellular segment spans residues 75-125; the sequence is AEEPIYCYTPHNFTRDQALYARGYCWTELRDALPGVDASLWPSLFEHKFLP. Residue Asn-86 is glycosylated (N-linked (GlcNAc...) asparagine). Residues 126–146 traverse the membrane as a helical segment; the sequence is YALLAFAAIMYVPALGWEFLA. Residues 147-230 are Cytoplasmic-facing; sequence STRLTSELNF…NFLAKLYLAR (84 aa). A helical membrane pass occupies residues 231-251; it reads HVLILLLSVVPISYLCTYYAT. Residues 252–295 lie on the Extracellular side of the membrane; the sequence is QKQNEFTCALGASPDGPVGSAGPTVRVSCKLPSVQLQRIIAGVD. A helical membrane pass occupies residues 296 to 316; the sequence is IVLLCFMNLIILVNLIHLFIF. Residues 317-617 lie on the Cytoplasmic side of the membrane; sequence RKSNFIFDKL…LGKADPLTIL (301 aa). The span at 394–408 shows a compositional bias: polar residues; the sequence is TTPTVRDSGIQTVDP. 2 disordered regions span residues 394 to 425 and 485 to 512; these read TTPT…PVVK and AHHY…HTRH. 2 positions are modified to phosphoserine: Ser-593 and Ser-604.

Belongs to the pannexin family. As to quaternary structure, homoheptameric. Post-translationally, S-palmitoylated in neural stem and progenitor cells. In terms of processing, cleaved by CASP3 and CASP7 during apoptosis. Cleavage has no effect on it function. Expression is enriched in central nervous system. Expressed in suprabasal layers of skin epidermis. As to expression, more aboundantly expressed in skin.

The protein resides in the cell membrane. It localises to the golgi apparatus membrane. The protein localises to the endoplasmic reticulum membrane. It carries out the reaction ATP(in) = ATP(out). The catalysed reaction is chloride(in) = chloride(out). The enzyme catalyses iodide(out) = iodide(in). It catalyses the reaction Na(+)(in) = Na(+)(out). It carries out the reaction D-gluconate(in) = D-gluconate(out). Its function is as follows. Ion channel with a slight anion preference. Also able to release ATP. Plays a role in regulating neurogenesis and apoptosis in keratinocytes. This chain is Pannexin-2 (Panx2), found in Mus musculus (Mouse).